A 689-amino-acid polypeptide reads, in one-letter code: SH3 domain-binding protein 1 (689 aa).

Positions 1–11 are enriched in basic residues; that stretch reads MMKRQLHRMRQ. The segment at 1–24 is disordered; that stretch reads MMKRQLHRMRQLAHTGSSGRTPET. An interaction with CGNL1 region spans residues 1–275; that stretch reads MMKRQLHRMR…TAAPFSRVYG (275 aa). Residues 17-262 enclose the BAR domain; the sequence is SSGRTPETAE…RDNHSQADSS (246 aa). 2 positions are modified to phosphoserine: serine 241 and serine 262. The Rho-GAP domain occupies 276–469; sequence VSLRTHLQDL…VLIQNADTLF (194 aa). The interval 470–689 is interaction with CD2AP; that stretch reads PGDINFSVSG…RPRGLISETD (220 aa). Residues 507–689 are disordered; the sequence is TAATPTPTPA…RPRGLISETD (183 aa). Residues serine 539 and serine 545 each carry the phosphoserine modification. The span at 565 to 575 shows a compositional bias: pro residues; that stretch reads PARPTMPPPQP. The segment covering 576-594 has biased composition (low complexity); it reads SSSRSSPPALSLPAGSVSP. The residue at position 586 (serine 586) is a Phosphoserine. Position 596 is a phosphothreonine (threonine 596). An SH3-binding motif is present at residues 611–620; the sequence is APTVPPPLPP. Residues 613 to 625 are compositionally biased toward pro residues; sequence TVPPPLPPAPPQP. The residue at position 641 (serine 641) is a Phosphoserine. Over residues 670-680 the composition is skewed to pro residues; that stretch reads PPTPVLPPQPR.

As to quaternary structure, interacts with RAC1. Interacts with the exocyst via EXOC4 and EXOC8; required for the localization of both SH3BP1 and the exocyst to the leading edge of migrating cells. Interacts with CD2AP and CGNL1; probably part of a complex at cell junctions. Interacts with CAPZA1; recruits CAPZA1 to forming cell junctions. May interact with AFDN. Interacts with PLXND1; they dissociate upon SEMA3E binding to PLXND1 allowing SH3BP1 to transduce downstream signal through RAC1 inactivation. Interacts with ABL1, GRB2 and SRC (via SH3 domain).

It localises to the cell projection. It is found in the cell junction. The protein resides in the tight junction. The protein localises to the adherens junction. Its subcellular location is the phagocytic cup. It localises to the nucleus. It is found in the cytoplasm. The protein resides in the cytosol. Functionally, GTPase activating protein/GAP which specifically converts GTP-bound Rho-type GTPases including RAC1 and CDC42 in their inactive GDP-bound form. By specifically inactivating RAC1 at the leading edge of migrating cells, it regulates the spatiotemporal organization of cell protrusions which is important for proper cell migration. Also negatively regulates CDC42 in the process of actin remodeling and the formation of epithelial cell junctions. Through its GAP activity toward RAC1 and/or CDC42 plays a specific role in phagocytosis of large particles. Specifically recruited by a PI3 kinase/PI3K-dependent mechanism to sites of large particles engagement, inactivates RAC1 and/or CDC42 allowing the reorganization of the underlying actin cytoskeleton required for engulfment. It also plays a role in angiogenesis and the process of repulsive guidance as part of a semaphorin-plexin signaling pathway. Following the binding of PLXND1 to extracellular SEMA3E it dissociates from PLXND1 and inactivates RAC1, inducing the intracellular reorganization of the actin cytoskeleton and the collapse of cells. This Rattus norvegicus (Rat) protein is SH3 domain-binding protein 1.